Consider the following 171-residue polypeptide: Peptide methionine sulfoxide reductase MsrA (171 aa).

Residue Cys13 is part of the active site.

This sequence belongs to the MsrA Met sulfoxide reductase family.

The enzyme catalyses L-methionyl-[protein] + [thioredoxin]-disulfide + H2O = L-methionyl-(S)-S-oxide-[protein] + [thioredoxin]-dithiol. It catalyses the reaction [thioredoxin]-disulfide + L-methionine + H2O = L-methionine (S)-S-oxide + [thioredoxin]-dithiol. Has an important function as a repair enzyme for proteins that have been inactivated by oxidation. Catalyzes the reversible oxidation-reduction of methionine sulfoxide in proteins to methionine. This chain is Peptide methionine sulfoxide reductase MsrA, found in Mycobacterium sp. (strain MCS).